Reading from the N-terminus, the 450-residue chain is tRNA-2-methylthio-N(6)-dimethylallyladenosine synthase (450 aa).

Residues 2 to 119 form the MTTase N-terminal domain; sequence KKVFVKTYGC…LPDLIARRQR (118 aa). Positions 11, 48, 82, 156, 160, and 163 each coordinate [4Fe-4S] cluster. Residues 142 to 375 enclose the Radical SAM core domain; that stretch reads RVEGPSAFVS…QATIEENVQR (234 aa). Residues 378–448 enclose the TRAM domain; that stretch reads QNMVGTVQRI…PHSLRGEIVV (71 aa).

It belongs to the methylthiotransferase family. MiaB subfamily. Monomer. It depends on [4Fe-4S] cluster as a cofactor.

It localises to the cytoplasm. It catalyses the reaction N(6)-dimethylallyladenosine(37) in tRNA + (sulfur carrier)-SH + AH2 + 2 S-adenosyl-L-methionine = 2-methylsulfanyl-N(6)-dimethylallyladenosine(37) in tRNA + (sulfur carrier)-H + 5'-deoxyadenosine + L-methionine + A + S-adenosyl-L-homocysteine + 2 H(+). Functionally, catalyzes the methylthiolation of N6-(dimethylallyl)adenosine (i(6)A), leading to the formation of 2-methylthio-N6-(dimethylallyl)adenosine (ms(2)i(6)A) at position 37 in tRNAs that read codons beginning with uridine. The protein is tRNA-2-methylthio-N(6)-dimethylallyladenosine synthase of Cupriavidus necator (strain ATCC 17699 / DSM 428 / KCTC 22496 / NCIMB 10442 / H16 / Stanier 337) (Ralstonia eutropha).